The sequence spans 2281 residues: Protein Ycf2 (2281 aa).

1634–1641 (GSIGTGRS) serves as a coordination point for ATP.

It belongs to the Ycf2 family.

It localises to the plastid. Its subcellular location is the chloroplast stroma. Probable ATPase of unknown function. Its presence in a non-photosynthetic plant (Epifagus virginiana) and experiments in tobacco indicate that it has an essential function which is probably not related to photosynthesis. This is Protein Ycf2 from Buxus microphylla (Littleleaf boxwood).